A 480-amino-acid chain; its full sequence is Cytochrome P450 monooxygenase ORF11 (480 aa).

The chain crosses the membrane as a helical span at residues Leu-9–Ala-29. N-linked (GlcNAc...) asparagine glycans are attached at residues Asn-265 and Asn-352. Cys-449 lines the heme pocket.

This sequence belongs to the cytochrome P450 family. It depends on heme as a cofactor.

It localises to the membrane. It functions in the pathway sesquiterpene biosynthesis. In terms of biological role, cytochrome P450 monooxygenase; part of the gene cluster that mediates the biosynthesis of PR-toxin, a bicyclic sesquiterpene belonging to the eremophilane class and acting as a mycotoxin. The first step of the pathway is catalyzed by the aristolochene synthase which performs the cyclization of trans,trans-farnesyl diphosphate (FPP) to the bicyclic sesquiterpene aristolochene. Following the formation of aristolochene, the non-oxygenated aristolochene is converted to the trioxygenated intermediate eremofortin B, via 7-epi-neopetasone. This conversion appears to involve three enzymes, a hydroxysterol oxidase-like enzyme, the quinone-oxidase prx3 that forms the quinone-type-structure in the bicyclic nucleus of aristolochene with the C8-oxo group and the C-3 hydroxyl group, and the P450 monooxygenase ORF6 that introduces the epoxide at the double bond between carbons 1 and 2. No monoxy or dioxy-intermediates have been reported to be released to the broth, so these three early oxidative reactions may be coupled together. Eremofortin B is further oxidized by another P450 monooxygenase, that introduces a second epoxide between carbons 7 and 11 prior to acetylation to eremofortin A by the acetyltransferase ORF8. The second epoxidation may be performed by a second P450 monooxygenase. After the acetylation step, eremofortin A is converted to eremofortin C and then to PR-toxin. First the conversion of eremofortin A to eremofortin C proceeds by oxidation of the side chain of the molecule at C-12 and is catalyzed by the short-chain oxidoreductase prx1. The cytochrome P450 monooxygenase ORF6 is probably also involved in this step. The primary alcohol formed at C-12 is finally oxidized by the short-chain alcohol dehydrogenase prx4 that forms PR-toxin. The chain is Cytochrome P450 monooxygenase ORF11 from Penicillium roqueforti (strain FM164).